The sequence spans 398 residues: 1-deoxy-D-xylulose 5-phosphate reductoisomerase (398 aa).

NADPH is bound by residues T11, G12, S13, I14, and N125. K126 lines the 1-deoxy-D-xylulose 5-phosphate pocket. E127 is an NADPH binding site. D151 is a Mn(2+) binding site. 4 residues coordinate 1-deoxy-D-xylulose 5-phosphate: S152, E153, S186, and H209. E153 serves as a coordination point for Mn(2+). G215 is a binding site for NADPH. 1-deoxy-D-xylulose 5-phosphate contacts are provided by S222, N227, K228, and E231. A Mn(2+)-binding site is contributed by E231.

It belongs to the DXR family. Requires Mg(2+) as cofactor. The cofactor is Mn(2+).

The catalysed reaction is 2-C-methyl-D-erythritol 4-phosphate + NADP(+) = 1-deoxy-D-xylulose 5-phosphate + NADPH + H(+). The protein operates within isoprenoid biosynthesis; isopentenyl diphosphate biosynthesis via DXP pathway; isopentenyl diphosphate from 1-deoxy-D-xylulose 5-phosphate: step 1/6. Catalyzes the NADPH-dependent rearrangement and reduction of 1-deoxy-D-xylulose-5-phosphate (DXP) to 2-C-methyl-D-erythritol 4-phosphate (MEP). This Acinetobacter baumannii (strain AB307-0294) protein is 1-deoxy-D-xylulose 5-phosphate reductoisomerase.